Here is a 291-residue protein sequence, read N- to C-terminus: Small ribosomal subunit biogenesis GTPase RsgA (291 aa).

A CP-type G domain is found at 63-221 (KNELKRPPVS…IADTPGFSAL (159 aa)). Residues 112–115 (TKKD) and 164–172 (GQSGVGKST) each bind GTP. Zn(2+) contacts are provided by Cys-245, Cys-250, His-252, and Cys-258.

It belongs to the TRAFAC class YlqF/YawG GTPase family. RsgA subfamily. Monomer. Associates with 30S ribosomal subunit, binds 16S rRNA. Requires Zn(2+) as cofactor.

It localises to the cytoplasm. Its function is as follows. One of several proteins that assist in the late maturation steps of the functional core of the 30S ribosomal subunit. Helps release RbfA from mature subunits. May play a role in the assembly of ribosomal proteins into the subunit. Circularly permuted GTPase that catalyzes slow GTP hydrolysis, GTPase activity is stimulated by the 30S ribosomal subunit. In Staphylococcus aureus (strain Mu50 / ATCC 700699), this protein is Small ribosomal subunit biogenesis GTPase RsgA.